We begin with the raw amino-acid sequence, 59 residues long: MNQGRIWTVVKPTVGLPLLLGSVTVIAILVHFAVLSNTTWFSKYWNGKAAAIESSVSIG.

Over 1-11 the chain is Cytoplasmic; that stretch reads MNQGRIWTVVK. A helical membrane pass occupies residues 12-35; that stretch reads PTVGLPLLLGSVTVIAILVHFAVL. His-31 contacts a bacteriochlorophyll. Over 36-59 the chain is Periplasmic; that stretch reads SNTTWFSKYWNGKAAAIESSVSIG.

Belongs to the antenna complex alpha subunit family. As to quaternary structure, the core complex is formed by different alpha and beta chains, binding bacteriochlorophyll molecules, and arranged most probably in tetrameric structures disposed around the reaction center. The non-pigmented gamma chains may constitute additional components.

It localises to the cell inner membrane. In terms of biological role, antenna complexes are light-harvesting systems, which transfer the excitation energy to the reaction centers. The chain is Light-harvesting protein B-800-850 alpha chain E (pucAE) from Rhodopseudomonas palustris (strain ATCC BAA-98 / CGA009).